Here is a 240-residue protein sequence, read N- to C-terminus: Nuclear receptor-interacting protein 3 (240 aa).

The sequence is that of Nuclear receptor-interacting protein 3 (Nrip3) from Mus musculus (Mouse).